Here is a 428-residue protein sequence, read N- to C-terminus: Lupus La protein homolog A (428 aa).

An HTH La-type RNA-binding domain is found at 7–99 (KEQKLDSDTK…RRSPAKPLPE (93 aa)). Residues 111–203 (KSVYIKGFPT…EERKLNKSEE (93 aa)) form the RRM domain. 2 disordered regions span residues 187–223 (EYHA…DAER) and 323–428 (QESF…VGDQ). Short sequence motifs (nuclear localization signal) lie at residues 196–212 (RKLN…QVKK) and 316–332 (KKIL…RKGR). The 123-residue stretch at 227–349 (EERVGSLLKF…KGRGGKGNDS (123 aa)) folds into the xRRM domain. 2 stretches are compositionally biased toward basic residues: residues 328–343 (KRKG…KGRG) and 352–361 (RKRTQFQGKK). The segment covering 366–377 (SSDDEDDMEESE) has biased composition (acidic residues). Over residues 406–428 (RSLDDKAEDGPAVKQSKTEVGDQ) the composition is skewed to basic and acidic residues.

Phosphorylated.

It is found in the nucleus. La protein plays a role in the transcription of RNA polymerase III. It is most probably a transcription termination factor. Binds to the 3' termini of virtually all nascent polymerase III transcripts. The protein is Lupus La protein homolog A (ssb-a) of Xenopus laevis (African clawed frog).